The chain runs to 33 residues: Photosystem II reaction center protein Psb30 (33 aa).

The chain crosses the membrane as a helical span at residues 5–25 (LIVQLGSLALITVAGPAIIVL).

The protein belongs to the Psb30/Ycf12 family. In terms of assembly, PSII is composed of 1 copy each of membrane proteins PsbA, PsbB, PsbC, PsbD, PsbE, PsbF, PsbH, PsbI, PsbJ, PsbK, PsbL, PsbM, PsbT, PsbY, PsbZ, Psb30/Ycf12, peripheral proteins of the oxygen-evolving complex and a large number of cofactors. It forms dimeric complexes.

Its subcellular location is the plastid. It localises to the chloroplast thylakoid membrane. Its function is as follows. A core subunit of photosystem II (PSII), probably helps stabilize the reaction center. In Euglena stellata, this protein is Photosystem II reaction center protein Psb30.